Here is a 291-residue protein sequence, read N- to C-terminus: Cell division protein FtsX (291 aa).

Over 1-18 (MSSNFDKFQKRRLISSYF) the chain is Cytoplasmic. The helical transmembrane segment at 19–39 (SVVLSVFLVLFLLGVLGLFII) threads the bilayer. At 40 to 162 (NSKKLADDFK…VNLVNDNIKK (123 aa)) the chain is on the periplasmic side. Residues 163–183 (VSMWILIISGFLTVIAVLLIN) traverse the membrane as a helical segment. The Cytoplasmic segment spans residues 184–220 (SSLRLSIHSNRFIIKTMQMVGATKSFIRKPFVMRSVK). The helical transmembrane segment at 221–241 (LGMLGALLAIIALIGLLFYVE) threads the bilayer. At 242-253 (TNFPGLGILEDK) the chain is on the periplasmic side. A helical membrane pass occupies residues 254–274 (ALIGLVLLAVFGLGVLITWVS). The Cytoplasmic segment spans residues 275–291 (THFATQRFLNLRTDDLY).

This sequence belongs to the ABC-4 integral membrane protein family. FtsX subfamily.

It localises to the cell inner membrane. Functionally, required for cell division and gliding motility. The sequence is that of Cell division protein FtsX from Flavobacterium johnsoniae (strain ATCC 17061 / DSM 2064 / JCM 8514 / BCRC 14874 / CCUG 350202 / NBRC 14942 / NCIMB 11054 / UW101) (Cytophaga johnsonae).